A 1576-amino-acid polypeptide reads, in one-letter code: Protein Shroom (1576 aa).

Disordered stretches follow at residues 1–31 (MKMR…ENNN), 46–100 (SNGA…TQAG), 112–142 (YDQT…DSTS), 187–244 (RQSH…SSTE), 267–434 (ISES…ISVT), 589–609 (VERQ…HSQS), and 621–660 (PNNL…SLLP). Residues 10–21 (GNGSEMGESTKS) are compositionally biased toward polar residues. Low complexity-rich tracts occupy residues 46–69 (SNGA…AGSV), 76–91 (HNSS…GSSL), and 128–142 (SEGY…DSTS). Residues 189-211 (SHSHSHSHAHSHSNSHGHSHGHA) are compositionally biased toward basic residues. 2 stretches are compositionally biased toward low complexity: residues 212–244 (HSAS…SSTE) and 267–283 (ISES…SSRV). Polar residues predominate over residues 305-317 (DSSPTASNSSQMM). The segment covering 376–388 (QSTLSTQSSLLEL) has biased composition (low complexity). The span at 399 to 415 (MGQSHSMGDLQQKNPHQ) shows a compositional bias: polar residues. S404 carries the post-translational modification Phosphoserine. The tract at residues 445–920 (APQPPAGKPS…LESNQQKRSN (476 aa)) is F-actin binding region required for planar polarity and cortical localization. Over residues 633–643 (TGSNSASTRDC) the composition is skewed to polar residues. Phosphoserine is present on residues S667 and S668. 7 disordered regions span residues 699–728 (ISFN…SSAT), 743–823 (AALA…NCFA), 849–876 (VPKK…HHAT), 910–939 (NLES…NTDP), 1036–1055 (GYGK…SQSY), 1091–1116 (PTAT…SHSD), and 1210–1244 (SFAN…DVHD). Basic residues predominate over residues 748–759 (QQHHPQQHRHAQ). A compositionally biased stretch (pro residues) spans 798 to 816 (PLPPPPPPEVLQPRPPPSP). Polar residues-rich tracts occupy residues 910 to 923 (NLES…NSKA) and 1042 to 1055 (KPVT…SQSY). Composition is skewed to pro residues over residues 1094–1108 (TPTP…PPRL) and 1217–1229 (MTPP…PPPL). Residues 1230 to 1239 (EPEEEEEQEE) show a composition bias toward acidic residues. A coiled-coil region spans residues 1232 to 1296 (EEEEEQEEND…LEAAREEHQT (65 aa)). The 268-residue stretch at 1305–1572 (RQPIELDYEQ…QLSSLSDALV (268 aa)) folds into the ASD2 domain.

This sequence belongs to the shroom family. As to quaternary structure, monomer or homodimer. Interacts with Rok. In terms of assembly, binds (via N-terminus) to F-actin.

The protein resides in the cell junction. It is found in the adherens junction. It localises to the cytoplasm. The protein localises to the cytoskeleton. Its subcellular location is the apical cell membrane. Binds to Rho-kinase Rok and targets it to the apical cell cortex where it mediates apical constriction. During embryogenic axis elongation, required for the localization to adherens junctions and the establishment of planar polarization of both Rho-kinase Rok and myosin regulatory light chain sqh. May be involved in the assembly of microtubule arrays during cell elongation. The polypeptide is Protein Shroom (Drosophila melanogaster (Fruit fly)).